Here is a 129-residue protein sequence, read N- to C-terminus: uncharacterized protein (129 aa).

One can recognise an HIT domain in the interval 3–109 (IFCKIINGEI…IPRYEGDGEV (107 aa)). Positions 94–98 (HVHFH) match the Histidine triad motif motif.

This is an uncharacterized protein from Methanocaldococcus jannaschii (strain ATCC 43067 / DSM 2661 / JAL-1 / JCM 10045 / NBRC 100440) (Methanococcus jannaschii).